The sequence spans 100 residues: Serine protease inhibitor 1 protein (100 aa).

The signal sequence occupies residues methionine 1–cysteine 20. Cystine bridges form between cysteine 42–cysteine 74, cysteine 51–cysteine 69, cysteine 54–cysteine 65, cysteine 58–cysteine 93, and cysteine 76–cysteine 90. A TIL domain is found at cysteine 42–cysteine 93.

It is found in the secreted. The polypeptide is Serine protease inhibitor 1 protein (Caenorhabditis elegans).